Consider the following 319-residue polypeptide: Transcription initiation factor IIB 6 (319 aa).

Residues 1-16 show a composition bias toward basic and acidic residues; it reads MTDARMRSREQERTDE. Residues 1-33 are disordered; that stretch reads MTDARMRSREQERTDETESESTDGCPECGGLVV. The segment at 21 to 51 adopts a TFIIB-type zinc-finger fold; the sequence is STDGCPECGGLVVNDEEHGESVCADCGLVVE. The Zn(2+) site is built by C25, C28, C43, and C46. Over residues 59–74 the composition is skewed to basic and acidic residues; sequence PEWRAFDSKEKDEKSR. The disordered stretch occupies residues 59–89; the sequence is PEWRAFDSKEKDEKSRVGAPTTNTMHDKGLS. 2 repeat units span residues 137-220 and 231-312.

It belongs to the TFIIB family.

Stabilizes TBP binding to an archaeal box-A promoter. Also responsible for recruiting RNA polymerase II to the pre-initiation complex (DNA-TBP-TFIIB). This Halobacterium salinarum (strain ATCC 700922 / JCM 11081 / NRC-1) (Halobacterium halobium) protein is Transcription initiation factor IIB 6.